Reading from the N-terminus, the 20-residue chain is CKPASIKIRLNSTADTGFYV.

This sequence belongs to the bacterial ribosomal protein bL33 family.

The chain is Large ribosomal subunit protein bL33 (rpmG) from Brevundimonas vesicularis (Pseudomonas vesicularis).